Here is a 173-residue protein sequence, read N- to C-terminus: Bifunctional protein PyrR (173 aa).

A PRPP-binding motif is present at residues 93–105; the sequence is VILVDDVLYTGRT.

The protein belongs to the purine/pyrimidine phosphoribosyltransferase family. PyrR subfamily. In terms of assembly, homodimer and homohexamer; in equilibrium.

It carries out the reaction UMP + diphosphate = 5-phospho-alpha-D-ribose 1-diphosphate + uracil. Its function is as follows. Regulates transcriptional attenuation of the pyrimidine nucleotide (pyr) operon by binding in a uridine-dependent manner to specific sites on pyr mRNA. This disrupts an antiterminator hairpin in the RNA and favors formation of a downstream transcription terminator, leading to a reduced expression of downstream genes. Functionally, also displays a weak uracil phosphoribosyltransferase activity which is not physiologically significant. The polypeptide is Bifunctional protein PyrR (Streptococcus thermophilus (strain ATCC BAA-491 / LMD-9)).